We begin with the raw amino-acid sequence, 481 residues long: Glutamyl-tRNA(Gln) amidotransferase subunit A (481 aa).

Catalysis depends on charge relay system residues Lys74 and Ser149. Ser173 (acyl-ester intermediate) is an active-site residue.

Belongs to the amidase family. GatA subfamily. As to quaternary structure, heterotrimer of A, B and C subunits.

The catalysed reaction is L-glutamyl-tRNA(Gln) + L-glutamine + ATP + H2O = L-glutaminyl-tRNA(Gln) + L-glutamate + ADP + phosphate + H(+). Its function is as follows. Allows the formation of correctly charged Gln-tRNA(Gln) through the transamidation of misacylated Glu-tRNA(Gln) in organisms which lack glutaminyl-tRNA synthetase. The reaction takes place in the presence of glutamine and ATP through an activated gamma-phospho-Glu-tRNA(Gln). The polypeptide is Glutamyl-tRNA(Gln) amidotransferase subunit A (Francisella tularensis subsp. holarctica (strain FTNF002-00 / FTA)).